Consider the following 1046-residue polypeptide: Arrestin-related trafficking adapter 3 (1046 aa).

A disordered region spans residues 115-141 (YPPTEQKSKKKMDASAPNESNNAANNF). Residues 128 to 140 (ASAPNESNNAANN) show a composition bias toward low complexity. A phosphoserine mark is found at Ser-155 and Ser-162. Composition is skewed to low complexity over residues 168–179 (SGLSSLNLSPLG) and 198–210 (RSSSVTSSNGPSR). The segment at 168 to 230 (SGLSSLNLSP…ATSPSVSHHN (63 aa)) is disordered. Phosphoserine occurs at positions 213 and 586. A compositionally biased stretch (polar residues) spans 605 to 614 (TRNSRQFNRN). Disordered stretches follow at residues 605–627 (TRNSRQFNRNSKSHPSDNTIFNS) and 651–820 (PLSP…FAHS). Positions 669 to 694 (FDFSSDFISDAASGTTTTEVSSSESS) are enriched in low complexity. A compositionally biased stretch (basic and acidic residues) spans 734-785 (KNSDKNSSETLNKKESMSKIEENKHKRETTPKKRENRDVKSLSTPQREESKD). Residues 802–811 (LSLSSSLHSS) show a composition bias toward low complexity. Ser-826 and Ser-838 each carry phosphoserine. The segment at 868–889 (NHDKNELNRHSTNTSSTPASAR) is disordered. The span at 877–889 (HSTNTSSTPASAR) shows a compositional bias: polar residues. Position 900 is a phosphoserine (Ser-900). Positions 986–1017 (QNSAESDHNNDIFTQGSGLTESSKNSDSEERF) are disordered. The span at 996–1008 (DIFTQGSGLTESS) shows a compositional bias: polar residues. Phosphoserine is present on residues Ser-1022 and Ser-1023.

This sequence belongs to the ALY1 family. Interacts with PCL6, PCL7 and RSP5. Post-translationally, ubiquitinated by RSP5. Phosphorylated by the cyclin-CDKs PCL6-PHO85 and PCL7-PHO85.

It localises to the cytoplasm. Its function is as follows. May regulate endocytosis by recruiting RSP5 ubiquitin ligase activity to specific plasma membrane proteins in response to extracellular stimuli. In Saccharomyces cerevisiae (strain ATCC 204508 / S288c) (Baker's yeast), this protein is Arrestin-related trafficking adapter 3 (ALY2).